The sequence spans 272 residues: Bifunctional protein FolD (272 aa).

Residues 155 to 157 (GRS), Ser-182, and Ile-223 each bind NADP(+).

This sequence belongs to the tetrahydrofolate dehydrogenase/cyclohydrolase family. As to quaternary structure, homodimer.

The catalysed reaction is (6R)-5,10-methylene-5,6,7,8-tetrahydrofolate + NADP(+) = (6R)-5,10-methenyltetrahydrofolate + NADPH. It carries out the reaction (6R)-5,10-methenyltetrahydrofolate + H2O = (6R)-10-formyltetrahydrofolate + H(+). It functions in the pathway one-carbon metabolism; tetrahydrofolate interconversion. Functionally, catalyzes the oxidation of 5,10-methylenetetrahydrofolate to 5,10-methenyltetrahydrofolate and then the hydrolysis of 5,10-methenyltetrahydrofolate to 10-formyltetrahydrofolate. The chain is Bifunctional protein FolD from Fervidobacterium nodosum (strain ATCC 35602 / DSM 5306 / Rt17-B1).